The chain runs to 141 residues: Nucleoside diphosphate kinase (141 aa).

Residues Lys-11, Phe-59, Arg-87, Thr-93, Arg-104, and Asn-114 each contribute to the ATP site. Catalysis depends on His-117, which acts as the Pros-phosphohistidine intermediate.

The protein belongs to the NDK family. As to quaternary structure, homotetramer. Requires Mg(2+) as cofactor.

Its subcellular location is the cytoplasm. The catalysed reaction is a 2'-deoxyribonucleoside 5'-diphosphate + ATP = a 2'-deoxyribonucleoside 5'-triphosphate + ADP. The enzyme catalyses a ribonucleoside 5'-diphosphate + ATP = a ribonucleoside 5'-triphosphate + ADP. Its function is as follows. Major role in the synthesis of nucleoside triphosphates other than ATP. The ATP gamma phosphate is transferred to the NDP beta phosphate via a ping-pong mechanism, using a phosphorylated active-site intermediate. This is Nucleoside diphosphate kinase from Pseudomonas fluorescens (strain SBW25).